The following is a 126-amino-acid chain: Small ribosomal subunit protein uS13 (126 aa).

The interval 92–126 is disordered; that stretch reads RMGLPVRGQRTRTNARTRRGGRRTVAGKKKAPAKK. The segment covering 100–126 has biased composition (basic residues); the sequence is QRTRTNARTRRGGRRTVAGKKKAPAKK.

Belongs to the universal ribosomal protein uS13 family. Part of the 30S ribosomal subunit. Forms a loose heterodimer with protein S19. Forms two bridges to the 50S subunit in the 70S ribosome.

Located at the top of the head of the 30S subunit, it contacts several helices of the 16S rRNA. In the 70S ribosome it contacts the 23S rRNA (bridge B1a) and protein L5 of the 50S subunit (bridge B1b), connecting the 2 subunits; these bridges are implicated in subunit movement. Contacts the tRNAs in the A and P-sites. This is Small ribosomal subunit protein uS13 from Cyanothece sp. (strain PCC 7425 / ATCC 29141).